The sequence spans 830 residues: MSKMAVLFLAVFLMNSVLMIYCDPDHYIRAGYNHKYPFRICSIAKGTDLMRFDRDISCSPYKSNAKMSEGFFIIYKTNIETYTFPVRTYKKELTFQSSYRDVGVVYFLDRTVMGLAMPVYEANLVNSHAQCYSAVAMKRPDGTVFSAFHEDNNKNNTLNLFPLNFKSITNKRFITTKEPYFARGPLWLYSTSTSLNCIVTEATAKAKYPFSYFALTTGEIVEGSPFFNGSNGKHFAEPLEKLTILENYTMIEDLMNGMNGATTLVRKIAFLEKADTLFSWEIKEENESVCMLKHWTTVTHGLRAETNETYHFISKELTAAFVAPKESLNLTDPKQTCIKNEFEKIINEVYMSDYNDTYSMNGSYQIFKTTGDLILIWQPLVQKSLMFLEQGSEKIRRRRDVGDVKSRHDILYVQLQYLYDTLKDYINDALGNLAESWCLDQKRTITMLHELSKISPSSIVSEVYGRPISAQLHGDVLAISKCIEVNQSSVQLHKSMRVVDAKGVRSETMCYNRPLVTFSFVNSTPEVVPGQLGLDNEILLGDHRTEECEIPSTKIFLSGNHAHVYTDYTHTNSTPIEDIEVLDAFIRLKIDPLENADFKVLDLYSPDELSRANVFDLENILREYNSYKSALYTIEAKIATNTPSYVNGINSFLQGLGAIGTGLGSVISVTAGALGDIVGGVVSFLKNPFGGGLMLILAIVVVVIIIVVFVRQRHVLSKPIDMMFPYATNPVTTVSSVTGTTVVKTPSVKDVDGGTSVAVSEKEEGMADVSGQVSDDEYSQEDALKMLKAIKSLDESYRRKPSSSESHASKPSLIDRIRYRGYKSVNVEEA.

An N-terminal signal peptide occupies residues 1 to 22; sequence MSKMAVLFLAVFLMNSVLMIYC. At 23 to 688 the chain is on the virion surface side; it reads DPDHYIRAGY…GGVVSFLKNP (666 aa). Disulfide bonds link Cys-41–Cys-482, Cys-58–Cys-438, Cys-131–Cys-197, and Cys-290–Cys-337. Residues 98–104 are involved in fusion and/or binding to host membrane; the sequence is SYRDVGV. N-linked (GlcNAc...) asparagine; by host glycosylation is present at Asn-155. Positions 184-191 are involved in fusion and/or binding to host membrane; the sequence is GPLWLYST. Asn-228, Asn-247, Asn-286, Asn-307, Asn-329, Asn-355, Asn-361, and Asn-486 each carry an N-linked (GlcNAc...) asparagine; by host glycan. A disulfide bond links Cys-510 and Cys-548. Hydrophobic membrane proximal region stretches follow at residues 634 to 686 and 644 to 685; these read IEAK…SFLK and SYVN…VSFL. Residues 689 to 709 form a helical membrane-spanning segment; sequence FGGGLMLILAIVVVVIIIVVF. The Intravirion portion of the chain corresponds to 710–830; the sequence is VRQRHVLSKP…GYKSVNVEEA (121 aa). The short motif at 822-825 is the Internalization motif element; it reads YKSV.

The protein belongs to the herpesviridae glycoprotein B family. In terms of assembly, homotrimer; disulfide-linked. Binds to heparan sulfate proteoglycans. Interacts with gH/gL heterodimer. Post-translationally, a proteolytic cleavage by host furin generates two subunits that remain linked by disulfide bonds.

The protein localises to the virion membrane. It localises to the host cell membrane. Its subcellular location is the host endosome membrane. The protein resides in the host Golgi apparatus membrane. Envelope glycoprotein that forms spikes at the surface of virion envelope. Essential for the initial attachment to heparan sulfate moieties of the host cell surface proteoglycans. Involved in fusion of viral and cellular membranes leading to virus entry into the host cell. Following initial binding to its host receptors, membrane fusion is mediated by the fusion machinery composed at least of gB and the heterodimer gH/gL. May be involved in the fusion between the virion envelope and the outer nuclear membrane during virion egress. In Human herpesvirus 6A (strain Uganda-1102) (HHV-6 variant A), this protein is Envelope glycoprotein B.